Here is a 500-residue protein sequence, read N- to C-terminus: Cysteine--tRNA ligase (500 aa).

Cys-29 contacts Zn(2+). A 'HIGH' region motif is present at residues 31–41; that stretch reads VTVYDLCHLGH. 3 residues coordinate Zn(2+): Cys-213, His-238, and Glu-242. The 'KMSKS' region motif lies at 270–274; sequence KMSKS. Lys-273 contributes to the ATP binding site.

This sequence belongs to the class-I aminoacyl-tRNA synthetase family. Monomer. Requires Zn(2+) as cofactor.

Its subcellular location is the cytoplasm. It catalyses the reaction tRNA(Cys) + L-cysteine + ATP = L-cysteinyl-tRNA(Cys) + AMP + diphosphate. This Prochlorococcus marinus (strain NATL1A) protein is Cysteine--tRNA ligase.